The primary structure comprises 98 residues: Integration host factor subunit alpha (98 aa).

The interval 51 to 71 (NFDLRDKNERPGRNPKTGEDI) is disordered. The segment covering 53–69 (DLRDKNERPGRNPKTGE) has biased composition (basic and acidic residues).

The protein belongs to the bacterial histone-like protein family. Heterodimer of an alpha and a beta chain.

Its function is as follows. This protein is one of the two subunits of integration host factor, a specific DNA-binding protein that functions in genetic recombination as well as in transcriptional and translational control. This chain is Integration host factor subunit alpha, found in Vibrio cholerae serotype O1 (strain ATCC 39541 / Classical Ogawa 395 / O395).